The sequence spans 357 residues: tRNA/tmRNA (uracil-C(5))-methyltransferase (357 aa).

The S-adenosyl-L-methionine site is built by Gln-180, Tyr-209, Asn-214, Glu-230, and Asp-290. Catalysis depends on Cys-315, which acts as the Nucleophile. The active-site Proton acceptor is Glu-349.

This sequence belongs to the class I-like SAM-binding methyltransferase superfamily. RNA M5U methyltransferase family. TrmA subfamily.

The catalysed reaction is uridine(54) in tRNA + S-adenosyl-L-methionine = 5-methyluridine(54) in tRNA + S-adenosyl-L-homocysteine + H(+). It carries out the reaction uridine(341) in tmRNA + S-adenosyl-L-methionine = 5-methyluridine(341) in tmRNA + S-adenosyl-L-homocysteine + H(+). Its function is as follows. Dual-specificity methyltransferase that catalyzes the formation of 5-methyluridine at position 54 (m5U54) in all tRNAs, and that of position 341 (m5U341) in tmRNA (transfer-mRNA). This is tRNA/tmRNA (uracil-C(5))-methyltransferase from Campylobacter jejuni (strain RM1221).